A 145-amino-acid polypeptide reads, in one-letter code: Small ribosomal subunit protein bS16 (145 aa).

Residues 82-145 (IKERAATNNP…EAAAEEQTEA (64 aa)) form a disordered region. Residues 95–115 (EPGKKAKERAEERAEKAREAA) show a composition bias toward basic and acidic residues. Over residues 116–137 (EAAAAAAAAPAEEAAAEAPAEA) the composition is skewed to low complexity.

This sequence belongs to the bacterial ribosomal protein bS16 family.

The protein is Small ribosomal subunit protein bS16 of Novosphingobium aromaticivorans (strain ATCC 700278 / DSM 12444 / CCUG 56034 / CIP 105152 / NBRC 16084 / F199).